We begin with the raw amino-acid sequence, 327 residues long: Thioredoxin reductase sirT (327 aa).

FAD-binding positions include 15–18, 37–42, His50, and Ala115; these read AGPA and DTGVFR. Cys139 and Cys142 are oxidised to a cystine. FAD-binding positions include Asp289 and 296–297; that span reads QV.

This sequence belongs to the class-II pyridine nucleotide-disulfide oxidoreductase family. In terms of assembly, homodimer. It depends on FAD as a cofactor.

It functions in the pathway mycotoxin biosynthesis. Thioredoxin reductase; part of the gene cluster that mediates the biosynthesis of sirodesmin PL, an epipolythiodioxopiperazine (ETP) characterized by a disulfide bridged cyclic dipeptide and that acts as a phytotoxin which is involved in the blackleg didease of canola. SirD catalyzes the O-prenylation of L-tyrosine (L-Tyr) in the presence of dimethylallyl diphosphate (DMAPP) to yield 4-O-dimethylallyl-L-Tyr, and therefore represents probably the first pathway-specific enzyme in the biosynthesis of sirodesmin PL. 4-O-dimethylallyl-L-Tyr, then undergoes condensation with L-Ser in a reaction catalyzed by the non-ribosomal peptide synthase sirP to form the diketopiperazine (DKP) backbone. Further bishydroxylation of the DKP performed by the cytochrome P450 monooxygenase sirC leads to the production of the intermediate phomamide. This step is essential to form the reactive thiol group required for toxicity of sirodesmin PL. The next steps of sirodesmin biosynthesis are not well understood yet, but some predictions could be made from intermediate compounds identification. Phomamide is converted into phomalizarine via oxidation, probably by sirT. Further oxidation, methylation (by sirM or sirN) and reduction steps convert phomalizarine to deacetyl sirodesmin. Finally, acetyltransferase sirH probably acetylates deacetyl sirodesmin to produce sirodesmin PL. This chain is Thioredoxin reductase sirT, found in Leptosphaeria maculans (Blackleg fungus).